Reading from the N-terminus, the 137-residue chain is Ribonuclease VapC18 (137 aa).

A PINc domain is found at 4–126 (CVDTSAWHHA…YDRVAAITGQ (123 aa)). Residues D6 and D96 each coordinate Mg(2+).

Belongs to the PINc/VapC protein family. It depends on Mg(2+) as a cofactor.

Functionally, toxic component of a type II toxin-antitoxin (TA) system. An RNase. The cognate antitoxin is VapB18. The polypeptide is Ribonuclease VapC18 (Mycobacterium tuberculosis (strain ATCC 25618 / H37Rv)).